The chain runs to 34 residues: Potassium channel toxin alpha-KTx 6.2 (34 aa).

Cystine bridges form between Cys-3/Cys-24, Cys-9/Cys-29, Cys-13/Cys-19, and Cys-31/Cys-34. Cys-34 is modified (cysteine amide).

It belongs to the short scorpion toxin superfamily. Potassium channel inhibitor family. Alpha-KTx 06 subfamily. As to expression, expressed by the venom gland.

The protein resides in the secreted. Functionally, blocks voltage-gated potassium channels Kv1.2/KCNA2 (IC(50)=0.12-0.8 nM), KCa3.1/KCNN4 (IC(50)=1-2.2 nM), Shaker B (IC(50)=2.39-80 nM), Kv1.1/KCNA1 (IC(50)=37-45 or no activity, depending on the study), Kv1.3/KCNA3 (IC(50)=150-180 or no activity, depending on the study). This is Potassium channel toxin alpha-KTx 6.2 from Scorpio palmatus (Israeli golden scorpion).